A 1623-amino-acid chain; its full sequence is RING finger protein 17 (1623 aa).

Positions 1 to 22 (MAAEASKTGPSRSSYQRMGRKS) are disordered. The segment at 32–75 (CTRCGRRVSRSSGHHCELQCGHAFCELCLLMTEECTTIICPDCE) adopts an RING-type zinc-finger fold. K234 carries the post-translational modification N6-acetyllysine. Tudor domains lie at 726–784 (CPVQ…FLNA), 962–1021 (KWEN…LKTM), and 1228–1285 (FWKK…PDIP). Residues 1438 to 1462 (NQSNQHSDTDDSGVSGESESESLDE) form a disordered region. A Tudor 4 domain is found at 1479–1539 (DFRTEMPCLA…CQIPSHLMRY (61 aa)).

In terms of assembly, interacts with MXD1, MXD3, MXD4, MXI1 and PIWIL1. Self-associates. Testis specific.

The protein localises to the cytoplasm. The protein resides in the nucleus. In terms of biological role, seems to be involved in regulation of transcriptional activity of MYC. In vitro, inhibits DNA-binding activity of Mad-MAX heterodimers. Can recruit Mad transcriptional repressors (MXD1, MXD3, MXD4 and MXI1) to the cytoplasm. May be involved in spermiogenesis. In Homo sapiens (Human), this protein is RING finger protein 17 (RNF17).